A 40-amino-acid polypeptide reads, in one-letter code: Mu-thomitoxin-Hme1b (40 aa).

3 cysteine pairs are disulfide-bonded: Cys-2–Cys-18, Cys-9–Cys-22, and Cys-17–Cys-33.

This sequence belongs to the neurotoxin 19 (CSTX) family. In terms of processing, contains 3 disulfide bonds. In terms of tissue distribution, expressed by the venom gland.

It is found in the secreted. In terms of biological role, blocks the Nav1.2/SCN2A, Nav1.4/SCN4A, Nav1.5/SCN5A and Nav1.6/SCN8A sodium channels. Shows a slight preference for the Nav1.2 and Nav1.4 channels. Reduces the peak amplitude of the sodium current and negatively shifts the steady-state inactivation process. Does not shift the threshold potential of activation or the voltage corresponding to maximal current. Does not change the reversal potential of the sodium current. May act on site 1 of the receptor. This Heriaeus mellotteei (Crab spider) protein is Mu-thomitoxin-Hme1b.